We begin with the raw amino-acid sequence, 224 residues long: Small ribosomal subunit protein uS3 (224 aa).

Positions Ile38–Lys106 constitute a KH type-2 domain.

This sequence belongs to the universal ribosomal protein uS3 family. As to quaternary structure, part of the 30S ribosomal subunit. Forms a tight complex with proteins S10 and S14.

Binds the lower part of the 30S subunit head. Binds mRNA in the 70S ribosome, positioning it for translation. The chain is Small ribosomal subunit protein uS3 from Lactobacillus acidophilus (strain ATCC 700396 / NCK56 / N2 / NCFM).